We begin with the raw amino-acid sequence, 232 residues long: Large ribosomal subunit protein uL1 (232 aa).

Belongs to the universal ribosomal protein uL1 family. Part of the 50S ribosomal subunit.

Its function is as follows. Binds directly to 23S rRNA. The L1 stalk is quite mobile in the ribosome, and is involved in E site tRNA release. In terms of biological role, protein L1 is also a translational repressor protein, it controls the translation of the L11 operon by binding to its mRNA. In Chlamydia abortus (strain DSM 27085 / S26/3) (Chlamydophila abortus), this protein is Large ribosomal subunit protein uL1.